We begin with the raw amino-acid sequence, 225 residues long: Venom allergen 5 (225 aa).

The signal sequence occupies residues 1 to 23 (MKISGFVYLILITTIINLSFSEA). Cystine bridges form between cysteine 27–cysteine 39, cysteine 31–cysteine 124, cysteine 49–cysteine 117, and cysteine 191–cysteine 208. One can recognise an SCP domain in the interval 69–210 (KQHNEFRQKV…WHRHYLVCNY (142 aa)).

Belongs to the CRISP family. Venom allergen 5-like subfamily. As to expression, expressed by the venom gland.

The protein resides in the secreted. The polypeptide is Venom allergen 5 (Vespa magnifica (Hornet)).